The sequence spans 277 residues: Phosphate import ATP-binding protein PstB (277 aa).

The 242-residue stretch at isoleucine 31 to isoleucine 272 folds into the ABC transporter domain. ATP is bound at residue glycine 63–serine 70.

This sequence belongs to the ABC transporter superfamily. Phosphate importer (TC 3.A.1.7) family. In terms of assembly, the complex is composed of two ATP-binding proteins (PstB), two transmembrane proteins (PstC and PstA) and a solute-binding protein (PstS).

The protein resides in the cell inner membrane. It catalyses the reaction phosphate(out) + ATP + H2O = ADP + 2 phosphate(in) + H(+). Functionally, part of the ABC transporter complex PstSACB involved in phosphate import. Responsible for energy coupling to the transport system. The protein is Phosphate import ATP-binding protein PstB of Pseudomonas fluorescens (strain ATCC BAA-477 / NRRL B-23932 / Pf-5).